Consider the following 345-residue polypeptide: Ferrochelatase (345 aa).

The Fe cation site is built by histidine 215 and glutamate 296.

The protein belongs to the ferrochelatase family.

It is found in the cytoplasm. The catalysed reaction is heme b + 2 H(+) = protoporphyrin IX + Fe(2+). It participates in porphyrin-containing compound metabolism; protoheme biosynthesis; protoheme from protoporphyrin-IX: step 1/1. Catalyzes the ferrous insertion into protoporphyrin IX. This chain is Ferrochelatase, found in Rhodopseudomonas palustris (strain BisA53).